The following is an 89-amino-acid chain: Small ribosomal subunit protein uS15 (89 aa).

Belongs to the universal ribosomal protein uS15 family. As to quaternary structure, part of the 30S ribosomal subunit. Forms a bridge to the 50S subunit in the 70S ribosome, contacting the 23S rRNA.

In terms of biological role, one of the primary rRNA binding proteins, it binds directly to 16S rRNA where it helps nucleate assembly of the platform of the 30S subunit by binding and bridging several RNA helices of the 16S rRNA. Forms an intersubunit bridge (bridge B4) with the 23S rRNA of the 50S subunit in the ribosome. In Chlorobium phaeobacteroides (strain DSM 266 / SMG 266 / 2430), this protein is Small ribosomal subunit protein uS15.